The following is an 89-amino-acid chain: Putative septation protein SpoVG (89 aa).

The protein belongs to the SpoVG family.

Its function is as follows. Could be involved in septation. The sequence is that of Putative septation protein SpoVG from Heliobacterium modesticaldum (strain ATCC 51547 / Ice1).